Reading from the N-terminus, the 201-residue chain is Rho GDP-dissociation inhibitor 2 (201 aa).

Residues 1–38 are disordered; the sequence is MTEKAPEPHVEEDDDDELDSKLNYKPPPQKSLKELQEM. N-acetylthreonine is present on T2. K21 carries the N6-acetyllysine modification. Y24 bears the Phosphotyrosine mark. Residues K25, K40, K47, K102, and K124 each carry the N6-acetyllysine modification. Position 145 is a phosphoserine (S145). Position 175 is an N6-acetyllysine (K175).

This sequence belongs to the Rho GDI family. Interacts with RHOA. Interacts with RAC1. Interacts with RAC2. Interacts with CDC42. In terms of tissue distribution, detected in bone marrow, thymus and spleen.

The protein localises to the cytoplasm. The protein resides in the cytosol. In terms of biological role, regulates the GDP/GTP exchange reaction of the Rho proteins by inhibiting the dissociation of GDP from them, and the subsequent binding of GTP to them. Regulates reorganization of the actin cytoskeleton mediated by Rho family members. This is Rho GDP-dissociation inhibitor 2 (ARHGDIB) from Homo sapiens (Human).